The chain runs to 104 residues: L-rhamnose mutarotase (104 aa).

A substrate-binding site is contributed by Tyr-18. His-22 serves as the catalytic Proton donor. Residues Tyr-41 and 76–77 each bind substrate; that span reads WW.

This sequence belongs to the rhamnose mutarotase family. As to quaternary structure, homodimer.

The protein localises to the cytoplasm. The enzyme catalyses alpha-L-rhamnose = beta-L-rhamnose. It functions in the pathway carbohydrate metabolism; L-rhamnose metabolism. Involved in the anomeric conversion of L-rhamnose. In Jannaschia sp. (strain CCS1), this protein is L-rhamnose mutarotase.